A 1369-amino-acid polypeptide reads, in one-letter code: ATP-dependent RNA helicase DHX29 (1369 aa).

Disordered regions lie at residues 27–75 (SAEA…TNDS) and 176–226 (SQEF…KNME). Phosphoserine is present on residues S71, S192, and S200. Polar residues predominate over residues 189–201 (KFQSPQIQATISP). Basic and acidic residues predominate over residues 208–226 (KTYEEDPKSKPKKEEKNME). 3 coiled-coil regions span residues 222-256 (EKNM…EEEE), 283-310 (LEKN…LEDH), and 492-519 (IAKL…NSED). Residues 502 to 526 (QQQQQQQHSENKRENSEDPEESWEN) form a disordered region. One can recognise a Helicase ATP-binding domain in the interval 582-755 (VETLKRHRVV…FTHCPILRIS (174 aa)). 595–602 (GETGSGKS) contributes to the ATP binding site. The DEAH box signature appears at 702-705 (DEVH). The Helicase C-terminal domain occupies 849-1026 (LILELLAYLD…ELCLHIMKCN (178 aa)).

The protein belongs to the DEAD box helicase family. DEAH subfamily. Part of the 43S pre-initiation complex (PIC) that contains at least Met-tRNA, EIF1, EIF1A (EIF1AX or EIF1AY), EIF2S1, EIF2S2, EIF2S3, EIF3A, EIF3B, EIF3C, EIF3D, EIF3E, EIF3F, EIF3G, EIF3H, EIF3I, EIF3J, EIF3K, EIF3L, EIF3M, DHX29 and the 40S ribosomal subunit.

Its subcellular location is the cytoplasm. It carries out the reaction ATP + H2O = ADP + phosphate + H(+). Functionally, ATP-binding RNA helicase involved in translation initiation. Part of the 43S pre-initiation complex that is required for efficient initiation on mRNAs of higher eukaryotes with structured 5'-UTRs by promoting efficient NTPase-dependent 48S complex formation. Specifically binds to the 40S ribosome near the mRNA entrance. Does not possess a processive helicase activity. The polypeptide is ATP-dependent RNA helicase DHX29 (Homo sapiens (Human)).